The sequence spans 271 residues: Calretinin (271 aa).

6 EF-hand domains span residues 16-51, 63-98, 107-142, 151-186, 195-230, and 235-270; these read LTAT…LEKA, NLGE…EENF, GSST…LLKK, KLQE…QENF, LTSE…LYEK, and MNIQ…SEPP. 25 residues coordinate Ca(2+): aspartate 29, aspartate 31, asparagine 33, tyrosine 35, glutamate 40, aspartate 76, asparagine 78, aspartate 80, lysine 82, glutamate 87, aspartate 120, aspartate 122, serine 124, tyrosine 126, glutamate 131, aspartate 164, asparagine 166, aspartate 168, lysine 170, glutamate 175, aspartate 208, aspartate 210, serine 212, tyrosine 214, and glutamate 219. Residue tyrosine 214 is modified to Phosphotyrosine.

Belongs to the calbindin family.

It localises to the synapse. The protein localises to the cell projection. It is found in the dendrite. Its function is as follows. Calcium-binding protein involved in calcium homeostasis and signal transduction. It plays a critical role in buffering intracellular calcium levels and modulating calcium-dependent signaling pathways. Predominantly expressed in specific neuronal populations, influences synaptic plasticity and neuronal excitability, contributing to learning and memory. During embryonic development, it facilitates neuronal differentiation and maturation. The chain is Calretinin (CALB2) from Bos taurus (Bovine).